Reading from the N-terminus, the 350-residue chain is Selenide, water dikinase (350 aa).

Cysteine 17 is a catalytic residue. Residues lysine 20 and 48–50 contribute to the ATP site; that span reads LFD. A Mg(2+)-binding site is contributed by aspartate 51. Residues aspartate 68, aspartate 91, and 139-141 each bind ATP; that span reads GHS. Aspartate 91 is a Mg(2+) binding site. Aspartate 229 contributes to the Mg(2+) binding site.

This sequence belongs to the selenophosphate synthase 1 family. Class I subfamily. Homodimer. The cofactor is Mg(2+).

The catalysed reaction is hydrogenselenide + ATP + H2O = selenophosphate + AMP + phosphate + 2 H(+). Its function is as follows. Synthesizes selenophosphate from selenide and ATP. The sequence is that of Selenide, water dikinase from Bdellovibrio bacteriovorus (strain ATCC 15356 / DSM 50701 / NCIMB 9529 / HD100).